The following is a 470-amino-acid chain: Probable tocopherol cyclase, chloroplastic (470 aa).

The N-terminal 61 residues, 1-61 (MDLAAAAVAV…APTPRDRALR (61 aa)), are a transit peptide targeting the chloroplast. The interval 14–48 (RPAPPPRRCAPRRHRRALAPRAASSSPSPSTAVAA) is disordered. The segment covering 22–31 (CAPRRHRRAL) has biased composition (basic residues). Residues 32–48 (APRAASSSPSPSTAVAA) show a composition bias toward low complexity.

In terms of tissue distribution, expressed in the roots, stems, leaves and spikelets.

Its subcellular location is the plastid. The protein localises to the chloroplast. The protein resides in the plastoglobule. Its pathway is cofactor biosynthesis; tocopherol biosynthesis. In terms of biological role, involved in the synthesis of both tocopherols and tocotrienols (vitamin E), which presumably protect photosynthetic complexes from oxidative stress. Catalyzes the conversion of 2-methyl-6-phytyl-1,4-hydroquinone and 2,3-dimethyl-5-phytyl-1,4-hydroquinone (DMPQ) to delta- and gamma-tocopherol respectively. Also converts 2,3-dimethyl-5-geranylgeranyl-1,4-hydroquinone (DMGQ) to gamma-tocotrienol. This is Probable tocopherol cyclase, chloroplastic (VTE1) from Oryza sativa subsp. japonica (Rice).